Here is a 485-residue protein sequence, read N- to C-terminus: Ribulose bisphosphate carboxylase large chain (485 aa).

The propeptide occupies 1 to 2; it reads MS. Pro3 is modified (N-acetylproline). Lys14 carries the N6,N6,N6-trimethyllysine modification. Substrate is bound by residues Asn123 and Thr173. Lys175 functions as the Proton acceptor in the catalytic mechanism. Position 177 (Lys177) interacts with substrate. Mg(2+) contacts are provided by Lys201, Asp203, and Glu204. Lys201 is modified (N6-carboxylysine). His294 serves as the catalytic Proton acceptor. Residues Arg295, His327, and Ser379 each contribute to the substrate site.

The protein belongs to the RuBisCO large chain family. Type I subfamily. In terms of assembly, heterohexadecamer of 8 large chains and 8 small chains; disulfide-linked. The disulfide link is formed within the large subunit homodimers. The cofactor is Mg(2+). The disulfide bond which can form in the large chain dimeric partners within the hexadecamer appears to be associated with oxidative stress and protein turnover.

The protein resides in the plastid. It localises to the chloroplast. The enzyme catalyses 2 (2R)-3-phosphoglycerate + 2 H(+) = D-ribulose 1,5-bisphosphate + CO2 + H2O. The catalysed reaction is D-ribulose 1,5-bisphosphate + O2 = 2-phosphoglycolate + (2R)-3-phosphoglycerate + 2 H(+). RuBisCO catalyzes two reactions: the carboxylation of D-ribulose 1,5-bisphosphate, the primary event in carbon dioxide fixation, as well as the oxidative fragmentation of the pentose substrate in the photorespiration process. Both reactions occur simultaneously and in competition at the same active site. The protein is Ribulose bisphosphate carboxylase large chain of Helianthus annuus (Common sunflower).